The primary structure comprises 179 residues: Guanosine-3',5'-bis(diphosphate) 3'-pyrophosphohydrolase MESH1 (179 aa).

Position 2 is an N-acetylglycine (G2). K25 is modified (N6-acetyllysine). Residues 32–127 (YINHPIGVAR…VKLADKLYNL (96 aa)) enclose the HD domain. H35, H61, and D62 together coordinate Mn(2+). Residues E65 and D66 each act as nucleophile in the active site. Position 97 is an N6-acetyllysine (K97). D122 contacts Mn(2+). At K123 the chain carries N6-acetyllysine.

It belongs to the MESH1 family. It depends on Mn(2+) as a cofactor.

It catalyses the reaction guanosine 3',5'-bis(diphosphate) + H2O = GDP + diphosphate + H(+). Functionally, ppGpp hydrolyzing enzyme involved in starvation response. This is Guanosine-3',5'-bis(diphosphate) 3'-pyrophosphohydrolase MESH1 (Hddc3) from Mus musculus (Mouse).